A 306-amino-acid polypeptide reads, in one-letter code: Ribonuclease Z (306 aa).

Residues histidine 63, histidine 65, aspartate 67, histidine 68, histidine 141, aspartate 211, and histidine 269 each contribute to the Zn(2+) site. Aspartate 67 functions as the Proton acceptor in the catalytic mechanism.

This sequence belongs to the RNase Z family. In terms of assembly, homodimer. It depends on Zn(2+) as a cofactor.

It catalyses the reaction Endonucleolytic cleavage of RNA, removing extra 3' nucleotides from tRNA precursor, generating 3' termini of tRNAs. A 3'-hydroxy group is left at the tRNA terminus and a 5'-phosphoryl group is left at the trailer molecule.. Its function is as follows. Zinc phosphodiesterase, which displays some tRNA 3'-processing endonuclease activity. Probably involved in tRNA maturation, by removing a 3'-trailer from precursor tRNA. In Staphylococcus carnosus (strain TM300), this protein is Ribonuclease Z.